Here is a 431-residue protein sequence, read N- to C-terminus: Mannan endo-1,4-beta-mannosidase 7 (431 aa).

An N-terminal signal peptide occupies residues 1 to 25 (MKLLALFPFLAIVIQLSCWELGTDA). Substrate contacts are provided by tryptophan 87 and asparagine 202. Catalysis depends on glutamate 203, which acts as the Proton donor. Residue tyrosine 280 coordinates substrate. Glutamate 320 functions as the Nucleophile in the catalytic mechanism. Residue tryptophan 362 coordinates substrate.

Belongs to the glycosyl hydrolase 5 (cellulase A) family. Expressed in stems, flowers, siliques and seeds. Expressed in root vasculature, leaf hydathodes, anther filaments, stigma, sepal vasculature, at the base and apical parts of siliques, and replum. Expressed in the micropylar endosperm and radicle tip in early germinating seeds.

It is found in the secreted. The enzyme catalyses Random hydrolysis of (1-&gt;4)-beta-D-mannosidic linkages in mannans, galactomannans and glucomannans.. Required for both, loosening of the micropylar endosperm, and rupture of the seed coat in germinating seeds. May participate in the hydrolysis of the mannans in the cell wall of germinating seeds. In Arabidopsis thaliana (Mouse-ear cress), this protein is Mannan endo-1,4-beta-mannosidase 7 (MAN7).